The chain runs to 155 residues: Ribosome maturation factor RimP (155 aa).

Belongs to the RimP family.

Its subcellular location is the cytoplasm. Its function is as follows. Required for maturation of 30S ribosomal subunits. The chain is Ribosome maturation factor RimP from Staphylococcus aureus (strain JH9).